The chain runs to 292 residues: Peroxisomal 2,4-dienoyl-CoA reductase [(3E)-enoyl-CoA-producing] (292 aa).

Alanine 2 carries the post-translational modification N-acetylalanine. Residues glycine 35 to isoleucine 40, arginine 60 to lysine 64, and aspartate 86 contribute to the NADP(+) site. Arginine 60 contributes to the substrate binding site. Position 64 is an N6-acetyllysine (lysine 64). Residues arginine 88, phenylalanine 118, and serine 126 to asparagine 128 contribute to the substrate site. N6-acetyllysine is present on lysine 151. Residues lysine 182 and proline 208 to threonine 214 contribute to the NADP(+) site. Arginine 219 contacts substrate. The residue at position 287 (serine 287) is a Phosphoserine. The Microbody targeting signal signature appears at alanine 290–leucine 292. An N6-acetyllysine modification is found at lysine 291.

This sequence belongs to the short-chain dehydrogenases/reductases (SDR) family. 2,4-dienoyl-CoA reductase subfamily. Monomer, dimer and oligomer.

It localises to the peroxisome. It carries out the reaction a (2E,4Z)-dienoyl-CoA + NADPH + H(+) = a 4,5-saturated-(3E)-enoyl-CoA + NADP(+). The enzyme catalyses a (2E,4E)-dienoyl-CoA + NADPH + H(+) = a 4,5-saturated-(3E)-enoyl-CoA + NADP(+). It catalyses the reaction (2E,4E)-hexadienoyl-CoA + NADPH + H(+) = (3E)-hexenoyl-CoA + NADP(+). The catalysed reaction is (2E,4E)-decadienoyl-CoA + NADPH + H(+) = (3E)-decenoyl-CoA + NADP(+). It carries out the reaction (2E,4Z,7Z,10Z,13Z,16Z,19Z)-docosaheptaenoyl-CoA + NADPH + H(+) = (3E,7Z,10Z,13Z,16Z,19Z)-docosahexaenoyl-CoA + NADP(+). Functionally, auxiliary enzyme of beta-oxidation. Participates in the degradation of unsaturated fatty enoyl-CoA esters having double bonds in both even- and odd-numbered positions in peroxisome. Catalyzes the NADP-dependent reduction of 2,4-dienoyl-CoA to yield trans-3-enoyl-CoA. Has activity towards short and medium chain 2,4-dienoyl-CoAs, but also towards 2,4,7,10,13,16,19-docosaheptaenoyl-CoA, suggesting that it does not constitute a rate limiting step in the peroxisomal degradation of docosahexaenoic acid. The protein is Peroxisomal 2,4-dienoyl-CoA reductase [(3E)-enoyl-CoA-producing] (Decr2) of Mus musculus (Mouse).